The following is a 58-amino-acid chain: Large ribosomal subunit protein eL20 (58 aa).

The segment at 37–58 (TTVGSQHNRKRPQIEIKEVSAA) is disordered. A compositionally biased stretch (basic and acidic residues) spans 48–58 (PQIEIKEVSAA).

Belongs to the eukaryotic ribosomal protein eL20 family. Part of the 50S ribosomal subunit. Binds 23S rRNA.

This is Large ribosomal subunit protein eL20 from Halorubrum lacusprofundi (strain ATCC 49239 / DSM 5036 / JCM 8891 / ACAM 34).